A 202-amino-acid polypeptide reads, in one-letter code: Probable WRKY transcription factor 59 (202 aa).

The WRKY DNA-binding region spans 103–168 (DEKVALDDGY…YEGRHNHPSP (66 aa)).

It belongs to the WRKY group II-c family.

Its subcellular location is the nucleus. Its function is as follows. Transcription factor. Interacts specifically with the W box (5'-(T)TGAC[CT]-3'), a frequently occurring elicitor-responsive cis-acting element. This Arabidopsis thaliana (Mouse-ear cress) protein is Probable WRKY transcription factor 59 (WRKY59).